Reading from the N-terminus, the 654-residue chain is Acetyl-coenzyme A synthetase (654 aa).

CoA contacts are provided by residues 190-193 (RGGK) and Thr313. ATP is bound by residues 389–391 (GEP), 413–418 (DTWWQT), Asp504, and Arg519. CoA is bound at residue Ser527. ATP is bound at residue Arg530. Mg(2+)-binding residues include Val541, His543, and Val546. Lys613 is subject to N6-acetyllysine.

This sequence belongs to the ATP-dependent AMP-binding enzyme family. Mg(2+) serves as cofactor. Post-translationally, acetylated. Deacetylation by the SIR2-homolog deacetylase activates the enzyme.

The enzyme catalyses acetate + ATP + CoA = acetyl-CoA + AMP + diphosphate. Functionally, catalyzes the conversion of acetate into acetyl-CoA (AcCoA), an essential intermediate at the junction of anabolic and catabolic pathways. AcsA undergoes a two-step reaction. In the first half reaction, AcsA combines acetate with ATP to form acetyl-adenylate (AcAMP) intermediate. In the second half reaction, it can then transfer the acetyl group from AcAMP to the sulfhydryl group of CoA, forming the product AcCoA. This is Acetyl-coenzyme A synthetase from Leptospira biflexa serovar Patoc (strain Patoc 1 / Ames).